Reading from the N-terminus, the 309-residue chain is Zinc finger CCCH domain-containing protein 31 (309 aa).

The disordered stretch occupies residues 1–36 (MEGAGAARKRSRPDTANGGAAGGKRSRETESFQTGL). C3H1-type zinc fingers lie at residues 37–65 (SSKL…HFVP) and 103–131 (SGKT…HGER). The disordered stretch occupies residues 86–106 (ARAPMDHAAGGNSHPASSGKT). Residues 175 to 239 (SATAKISVDA…DQIKQASNMV (65 aa)) enclose the KH domain. Residues 249–273 (STPAKKPAGSAAGAAPAGRGGPGGR) are disordered. Low complexity predominate over residues 251-265 (PAKKPAGSAAGAAPA). Residues 275–302 (NYKTKLCENFVKGTCTFGDRCHFAHGEN) form a C3H1-type 3 zinc finger.

In Oryza sativa subsp. japonica (Rice), this protein is Zinc finger CCCH domain-containing protein 31.